The sequence spans 372 residues: Cobalt-precorrin-5B C(1)-methyltransferase (372 aa).

The protein belongs to the CbiD family.

It catalyses the reaction Co-precorrin-5B + S-adenosyl-L-methionine = Co-precorrin-6A + S-adenosyl-L-homocysteine. It functions in the pathway cofactor biosynthesis; adenosylcobalamin biosynthesis; cob(II)yrinate a,c-diamide from sirohydrochlorin (anaerobic route): step 6/10. In terms of biological role, catalyzes the methylation of C-1 in cobalt-precorrin-5B to form cobalt-precorrin-6A. The polypeptide is Cobalt-precorrin-5B C(1)-methyltransferase (Geobacillus thermodenitrificans (strain NG80-2)).